The sequence spans 98 residues: Minor capsid protein P13 (98 aa).

The segment at 3-23 (KITPFLIAAVVAVIVLAVWLF) is hydrophobic.

Interacts with the major capsid protein.

It is found in the virion. Its function is as follows. One of the minor capsid proteins that constitute a network internal to the major capsid proteins and outside the lipid membrane. The minor capsid protein P13 does not serve a cross-linking function between neighboring capsomers, it may play a role in the viral capsid assembly. This is Minor capsid protein P13 from Chlorella (PBCV-1).